We begin with the raw amino-acid sequence, 135 residues long: C-type natriuretic peptide (135 aa).

A signal peptide spans 1–25; that stretch reads MSGHTSFYCGLLLLLLIQVQARPRA. A propeptide spanning residues 26–113 is cleaved from the precursor; the sequence is DDSLQVLSRL…PLRFKGRSKK (88 aa). The segment at 46-67 is disordered; it reads EELNNEAQEISPAASLPDLNTD. Cysteine 119 and cysteine 135 form a disulfide bridge.

The protein belongs to the natriuretic peptide family.

It is found in the secreted. Hormone which may be vasoactive and natriuretic. Has a cGMP-stimulating activity. The sequence is that of C-type natriuretic peptide from Squalus acanthias (Spiny dogfish).